The sequence spans 245 residues: Serine/arginine-rich splicing factor 1B (245 aa).

Residues 15–90 (CRIYVGNLPP…YRLRVEFPRS (76 aa)) enclose the RRM 1 domain. 2 disordered regions span residues 89–116 (RSGRGGGRGGGGGGGVGAPRGRYGPPSR) and 192–245 (KVDG…RSRT). Residues 91 to 106 (GRGGGRGGGGGGGVGA) show a composition bias toward gly residues. Residues 120–194 (YRVIVSGLPP…ETAYIRVKVD (75 aa)) form the RRM 2 domain. Basic residues predominate over residues 204-245 (SRSRSRSRSRSRSNSRSRSYSPRRSRGSPRYSPRHSRSRSRT).

Belongs to the splicing factor SR family.

It localises to the cytoplasm. It is found in the nucleus speckle. Functionally, may play a role in preventing exon skipping, ensuring the accuracy of splicing and regulating alternative splicing. The sequence is that of Serine/arginine-rich splicing factor 1B (srsf1b) from Danio rerio (Zebrafish).